We begin with the raw amino-acid sequence, 132 residues long: MGRTWCGMWRRRRPGRRSAVPRWPHLSSQSGVEPPDRWTGTPGWPSRDQEAPGSMMPPAAAQPSAHGALVPPATAHEPVDHPALHWLACCCCLSLPGQLPLAIRLGWDLDLEAGPSSGKLCPRARRWQPLPS.

Positions 17 to 75 (RSAVPRWPHLSSQSGVEPPDRWTGTPGWPSRDQEAPGSMMPPAAAQPSAHGALVPPATA) are disordered. Positions 51-65 (APGSMMPPAAAQPSA) are enriched in low complexity.

As to expression, expressed exclusively in heart.

The protein localises to the cytoplasm. This is an uncharacterized protein from Homo sapiens (Human).